Here is a 284-residue protein sequence, read N- to C-terminus: MAESEAETPSTPGEFESKYFEFHGVRLPPFCRGKMEEIANFPVRPSDVWIVTYPKSGTSLLQEVVYLVSQGADPDEIGLMNIDEQLPVLEYPQPGLDIIKELTSPRLIKSHLPYRFLPSDLHNGDSKVIYMARNPKDLVVSYYQFHRSLRTMSYRGTFQEFCRRFMNDKLGYGSWFEHVQEFWEHRMDSNVLFLKYEDMHRDLVTMVEQLARFLGVSCDKAQLEALTEHCHQLVDQCCNAEALPVGRGRVGLWKDIFTVSMNEKFDLVYKQKMGKCDLTFDFYL.

Phosphothreonine occurs at positions 8, 11, and 205.

The protein belongs to the sulfotransferase 1 family. Highly expressed in the cerebral cortex and frontal lobe, slightly less in the cerebellum, occipital and temporal lobes, relatively low in the medulla and putamen, and lowest in the spinal cord. No expression detected in the pancreas. Highly expressed in fetal brain and occipital lobe, slightly less in the whole brain, frontal lobe, hippocampus, and lung, very low expression in cerebellum, medulla oblongata, temporal lobe, testis, kidney and appendix.

The protein localises to the cytoplasm. Atypical sulfotransferase family member with very low affinity for 3'-phospho-5'-adenylyl sulfate (PAPS) and very low catalytic activity towards L-triiodothyronine, thyroxine, estrone, p-nitrophenol, 2-naphthylamine, and 2-beta-naphthol. May have a role in the metabolism of drugs and neurotransmitters in the CNS. The sequence is that of Sulfotransferase 4A1 (SULT4A1) from Homo sapiens (Human).